The sequence spans 241 residues: Orotidine 5'-phosphate decarboxylase (241 aa).

Residues Asp-15, Lys-36, 63–72 (DLKFHDIPNT), Thr-127, Arg-189, Gln-198, Gly-218, and Arg-219 contribute to the substrate site. The Proton donor role is filled by Lys-65.

The protein belongs to the OMP decarboxylase family. Type 1 subfamily. Homodimer.

The catalysed reaction is orotidine 5'-phosphate + H(+) = UMP + CO2. It functions in the pathway pyrimidine metabolism; UMP biosynthesis via de novo pathway; UMP from orotate: step 2/2. In terms of biological role, catalyzes the decarboxylation of orotidine 5'-monophosphate (OMP) to uridine 5'-monophosphate (UMP). This Prochlorococcus marinus (strain MIT 9211) protein is Orotidine 5'-phosphate decarboxylase.